Reading from the N-terminus, the 1242-residue chain is ATP-dependent helicase/nuclease subunit A (1242 aa).

In terms of domain architecture, UvrD-like helicase ATP-binding spans 12-487; sequence SRWTDEQWKA…IDLASNFRSR (476 aa). 33 to 40 contacts ATP; the sequence is AAAGSGKT. A UvrD-like helicase C-terminal domain is found at 514 to 808; sequence AAQLKYGADY…RIMTIHSSKG (295 aa).

The protein belongs to the helicase family. AddA subfamily. In terms of assembly, heterodimer of AddA and AddB/RexB. The cofactor is Mg(2+).

The enzyme catalyses Couples ATP hydrolysis with the unwinding of duplex DNA by translocating in the 3'-5' direction.. It catalyses the reaction ATP + H2O = ADP + phosphate + H(+). The heterodimer acts as both an ATP-dependent DNA helicase and an ATP-dependent, dual-direction single-stranded exonuclease. Recognizes the chi site generating a DNA molecule suitable for the initiation of homologous recombination. The AddA nuclease domain is required for chi fragment generation; this subunit has the helicase and 3' -&gt; 5' nuclease activities. This is ATP-dependent helicase/nuclease subunit A from Geobacillus kaustophilus (strain HTA426).